A 180-amino-acid polypeptide reads, in one-letter code: Nucleoid-associated protein At4g30620, chloroplastic (180 aa).

Residues 1 to 48 constitute a chloroplast transit peptide; the sequence is MASTATNTDFFKTLLSPFSNGNAAQRSSRQNIVWLNRKQSGNNNRSLR. The disordered stretch occupies residues 45-65; sequence RSLRVNGLFGGGKKDNKEDGQ. Residues 56–65 are compositionally biased toward basic and acidic residues; that stretch reads GKKDNKEDGQ.

The protein belongs to the YbaB/EbfC family. In terms of assembly, homodimer. Binds to the translation initiation factors TIF3E1.

It localises to the plastid. The protein resides in the chloroplast. Binds to DNA and alters its conformation. May be involved in regulation of gene expression, nucleoid organization and DNA protection. This is Nucleoid-associated protein At4g30620, chloroplastic from Arabidopsis thaliana (Mouse-ear cress).